Here is a 96-residue protein sequence, read N- to C-terminus: Co-chaperonin GroES (96 aa).

It belongs to the GroES chaperonin family. Heptamer of 7 subunits arranged in a ring. Interacts with the chaperonin GroEL.

It is found in the cytoplasm. In terms of biological role, together with the chaperonin GroEL, plays an essential role in assisting protein folding. The GroEL-GroES system forms a nano-cage that allows encapsulation of the non-native substrate proteins and provides a physical environment optimized to promote and accelerate protein folding. GroES binds to the apical surface of the GroEL ring, thereby capping the opening of the GroEL channel. This Neisseria meningitidis serogroup A / serotype 4A (strain DSM 15465 / Z2491) protein is Co-chaperonin GroES.